The following is a 344-amino-acid chain: Calcium homeostasis modulator protein 3 (344 aa).

Over 1–20 the chain is Cytoplasmic; the sequence is MDKFRMLFQHFQSSSESVMN. The central pore stretch occupies residues 9-36; sequence QHFQSSSESVMNGICLLLAAVTVKLYSS. A helical membrane pass occupies residues 21-36; it reads GICLLLAAVTVKLYSS. At 37 to 48 the chain is on the extracellular side; it reads FDFNCPCLVHYN. 2 disulfides stabilise this stretch: cysteine 41–cysteine 126 and cysteine 43–cysteine 157. The chain crosses the membrane as a helical span at residues 49–71; sequence ALYGLGLLLTPPLALFLCGLLAN. The Cytoplasmic portion of the chain corresponds to 72-98; that stretch reads RQSVVMVEEWRRPAGHRRKDPGIIRYM. Cysteine 99 carries S-palmitoyl cysteine lipidation. A helical membrane pass occupies residues 99–124; that stretch reads CSSVLQRALAAPLVWILLALLDGKCF. At 125 to 176 the chain is on the extracellular side; it reads VCAFSSSVDPEKFLDFANMTPSQVQLFLAKVPCKEDELVRDSPARKAVSRYL. The N-linked (GlcNAc...) asparagine glycan is linked to asparagine 142. The chain crosses the membrane as a helical span at residues 177 to 202; sequence RCLSQAIGWSVTLLLIIAAFLARCLR. 2 S-palmitoyl cysteine lipidation sites follow: cysteine 200 and cysteine 204. At 203–344 the chain is on the cytoplasmic side; that stretch reads PCFDQTVFLQ…GTRLSQHTDV (142 aa).

It belongs to the CALHM family. Associates with CALHM1 as a pore-forming subunit in a hetero-hexameric channel complex. Post-translationally, N-glycosylated. In terms of processing, palmitoylated by ZDHHC3 and ZDHHC15. Palmitoylation positively regulates CALHM1:CALHM3 channel conductance. In terms of tissue distribution, specifically expressed in circumvallate taste bud cells.

The protein localises to the basolateral cell membrane. It catalyses the reaction ATP(in) = ATP(out). The enzyme catalyses Ca(2+)(in) = Ca(2+)(out). It carries out the reaction Na(+)(in) = Na(+)(out). The catalysed reaction is K(+)(in) = K(+)(out). It catalyses the reaction chloride(in) = chloride(out). Its function is as follows. Pore-forming subunit of gustatory voltage-gated ion channels required for sensory perception of sweet, bitter and umami tastes. With CALHM1 forms a fast-activating voltage-gated ATP-release channel in type II taste bud cells, ATP acting as a neurotransmitter to activate afferent neural gustatory pathways. Acts both as a voltage-gated and calcium-activated ion channel: mediates neuronal excitability in response to membrane depolarization and low extracellular Ca(2+) concentration. Has poor ion selectivity and forms a wide pore (around 14 Angstroms) that mediates permeation of small ions including Ca(2+), Na(+), K(+) and Cl(-), as well as larger ions such as ATP(4-). The protein is Calcium homeostasis modulator protein 3 of Homo sapiens (Human).